Here is a 3390-residue protein sequence, read N- to C-terminus: Genome polyprotein (3390 aa).

The interaction with host EXOC1 stretch occupies residues 1–15; the sequence is MNNQRKKTGKPSINM. At 1–100 the chain is on the cytoplasmic side; that stretch reads MNNQRKKTGK…MLSIINKRKK (100 aa). The interval 37–72 is hydrophobic; homodimerization of capsid protein C; that stretch reads LLNGQGPMKLVMAFIAFLRFLAIPPTAGVLARWGTF. The propeptide at 101–114 is ER anchor for the capsid protein C, removed in mature form by serine protease NS3; that stretch reads TSLCLMMMLPATLA. The helical transmembrane segment at 101–118 threads the bilayer; that stretch reads TSLCLMMMLPATLAFHLT. Over 119–243 the chain is Extracellular; that stretch reads SRDGEPRMIV…VEKVETWALR (125 aa). Asparagine 183 is a glycosylation site (N-linked (GlcNAc...) asparagine; by host). The helical transmembrane segment at 244–264 threads the bilayer; sequence HPGFTILALFLAHYIGTSLTQ. Residue lysine 265 is a topological domain, cytoplasmic. Residues 266–280 form a helical membrane-spanning segment; the sequence is VVIFILLMLVTPSMT. Residues 281-723 are Extracellular-facing; the sequence is MRCVGVGNRD…VHQIFGSAYT (443 aa). Intrachain disulfides connect cysteine 283–cysteine 310, cysteine 340–cysteine 401, cysteine 354–cysteine 385, and cysteine 372–cysteine 396. Asparagine 347 is a glycosylation site (N-linked (GlcNAc...) asparagine; by host). Residues 378–391 are fusion peptide; it reads DRGWGNGCGLFGKG. An N-linked (GlcNAc...) asparagine; by host glycan is attached at asparagine 433. Cystine bridges form between cysteine 463-cysteine 563 and cysteine 580-cysteine 611. Residues 724–744 form a helical membrane-spanning segment; that stretch reads ALFSGVSWIMKIGIGVLLTWI. Residues 745 to 750 lie on the Cytoplasmic side of the membrane; it reads GLNSKN. The chain crosses the membrane as a helical span at residues 751–771; that stretch reads TSMSFSCIAIGIITLYLGVVV. The Extracellular segment spans residues 772 to 1193; that stretch reads QADMGCVINW…MIGSNASDRM (422 aa). 6 disulfide bridges follow: cysteine 777–cysteine 788, cysteine 828–cysteine 916, cysteine 952–cysteine 996, cysteine 1053–cysteine 1102, cysteine 1064–cysteine 1086, and cysteine 1085–cysteine 1089. Asparagine 903 and asparagine 980 each carry an N-linked (GlcNAc...) asparagine; by host glycan. N-linked (GlcNAc...) asparagine; by host glycans are attached at residues asparagine 1132 and asparagine 1188. The chain crosses the membrane as a helical span at residues 1194–1218; that stretch reads GMGVTYLALIATFKIQPFLALGFFL. The Cytoplasmic segment spans residues 1219-1224; the sequence is RKLTSR. Residues 1225-1243 traverse the membrane as a helical segment; it reads ENLLLGVGLAMAATLRLPE. Residues 1244–1267 are Lumenal-facing; it reads DIEQMANGIALGLMALKLITQFET. A helical transmembrane segment spans residues 1268-1288; sequence YQLWTALVSLTCSNTIFTLTV. Alanine 1289 is a topological domain (cytoplasmic). Residues 1290-1308 form a helical membrane-spanning segment; the sequence is WRTATLILAGISLLPVCQS. Topologically, residues 1309–1315 are lumenal; that stretch reads SSMRKTD. Residues 1316–1336 traverse the membrane as a helical segment; it reads WLPMTVAAMGVPPLPLFIFSL. Residues 1337-1344 are Cytoplasmic-facing; the sequence is KDTLKRRS. Residues 1345–1365 traverse the membrane as a helical segment; it reads WPLNEGVMAVGLVSILASSLL. The Lumenal portion of the chain corresponds to 1366-1368; the sequence is RND. The chain crosses the membrane as a helical span at residues 1369-1389; that stretch reads VPMAGPLVAGGLLIACYVITG. The Cytoplasmic segment spans residues 1390–1443; sequence TSADLTVEKAADVTWEEEAEQTGVSHNLMITVDDDGTMRIKDDETENILTVLLK. An interacts with and activates NS3 protease region spans residues 1396 to 1435; sequence VEKAADVTWEEEAEQTGVSHNLMITVDDDGTMRIKDDETE. The helical intramembrane region spans 1444–1464; sequence TALLIVSGIFPCSIPATLLVW. The Cytoplasmic portion of the chain corresponds to 1465–2146; that stretch reads HTWQKQTQRS…VEELPETMET (682 aa). One can recognise a Peptidase S7 domain in the interval 1474-1651; it reads SGVLWDVPSP…NAEPDGPTPE (178 aa). Active-site charge relay system; for serine protease NS3 activity residues include histidine 1524, aspartate 1548, and serine 1608. The Helicase ATP-binding domain maps to 1654 to 1810; the sequence is EEMFKKRNLT…QSNAPIQDEE (157 aa). An important for RNA-binding region spans residues 1658-1661; it reads KKRN. 1667 to 1674 lines the ATP pocket; sequence LHPGSGKT. The short motif at 1758-1761 is the DEAH box element; that stretch reads DEAH. The region spanning 1821-1986 is the Helicase C-terminal domain; sequence GNEWITDFVG…GIIPALFEPE (166 aa). Lysine 1862 carries the post-translational modification N6-acetyllysine; by host. A helical membrane pass occupies residues 2147-2167; the sequence is LLLLGLMILLTGGAMLFLISG. Residues 2168-2169 lie on the Lumenal side of the membrane; it reads KG. Positions 2170–2190 form an intramembrane region, helical; the sequence is IGKTSIGLICVIASSGMLWMA. A topological domain (lumenal) is located at residue aspartate 2191. A helical transmembrane segment spans residues 2192–2212; it reads VPLQWIASAIVLEFFMMVLLI. The Cytoplasmic segment spans residues 2213–2227; that stretch reads PEPEKQRTPQDNQLA. A helical membrane pass occupies residues 2228-2248; it reads YVVIGILTLAAIVAANEMGLL. Topologically, residues 2249–2273 are lumenal; it reads ETTKRDLGMSKEPGVVSPTSYLDVD. Positions 2274–2294 form an intramembrane region, helical; the sequence is LHPASAWTLYAVATTVITPML. At 2295–2305 the chain is on the lumenal side; the sequence is RHTIENSTANV. N-linked (GlcNAc...) asparagine; by host glycans are attached at residues asparagine 2300 and asparagine 2304. Positions 2306–2326 form an intramembrane region, helical; that stretch reads SLAAIANQAVVLMGLDKGWPI. The Lumenal segment spans residues 2327-2346; the sequence is SKMDLGVPLLALGCYSQVNP. A helical membrane pass occupies residues 2347 to 2367; sequence LTLIAAVLLLVTHYAIIGPGL. Topologically, residues 2368-2412 are cytoplasmic; the sequence is QAKATREAQKRTAAGIMKNPTVDGIMTIDLDPVIYDSKFEKQLGQ. A helical membrane pass occupies residues 2413 to 2433; that stretch reads VMLLVLCAVQLLLMRTSWALC. The Lumenal portion of the chain corresponds to 2434–2458; the sequence is EVLTLATGPITTLWEGSPGKFWNTT. N-linked (GlcNAc...) asparagine; by host glycosylation occurs at asparagine 2456. Residues 2459–2479 form a helical membrane-spanning segment; it reads IAVSMANIFRGSYLAGAGLAF. The Cytoplasmic portion of the chain corresponds to 2480–3390; it reads SIMKSVGTGK…KEEESEGAIW (911 aa). The 262-residue stretch at 2492–2753 folds into the mRNA cap 0-1 NS5-type MT domain; that stretch reads TGSQGETLGE…DVDLGAGTRH (262 aa). Serine 2546 contacts S-adenosyl-L-methionine. Serine 2546 is subject to Phosphoserine. The active-site For 2'-O-MTase activity is lysine 2551. An SUMO-interacting motif motif is present at residues 2567-2570; that stretch reads VIDL. Positions 2576, 2577, 2594, 2595, 2621, and 2622 each coordinate S-adenosyl-L-methionine. Catalysis depends on aspartate 2636, which acts as the For 2'-O-MTase activity. Isoleucine 2637 provides a ligand contact to S-adenosyl-L-methionine. Catalysis depends on for 2'-O-MTase activity residues lysine 2670 and glutamate 2706. Tyrosine 2708 is a binding site for S-adenosyl-L-methionine. The Zn(2+) site is built by glutamate 2927, histidine 2931, cysteine 2936, and cysteine 2939. The RdRp catalytic domain maps to 3018–3168; the sequence is AMYADDTAGW…PIDDRFANAL (151 aa). Zn(2+)-binding residues include histidine 3202, cysteine 3218, and cysteine 3337.

This sequence in the N-terminal section; belongs to the class I-like SAM-binding methyltransferase superfamily. mRNA cap 0-1 NS5-type methyltransferase family. Homodimer. Interacts (via N-terminus) with host EXOC1 (via C-terminus); this interaction results in EXOC1 degradation through the proteasome degradation pathway. As to quaternary structure, forms heterodimers with envelope protein E in the endoplasmic reticulum and Golgi. In terms of assembly, homodimer; in the endoplasmic reticulum and Golgi. Interacts with protein prM. Interacts with non-structural protein 1. Homodimer; Homohexamer when secreted. Interacts with envelope protein E. As to quaternary structure, interacts (via N-terminus) with serine protease NS3. In terms of assembly, forms a heterodimer with serine protease NS3. May form homooligomers. Forms a heterodimer with NS2B. Interacts with NS4B. Interacts with unphosphorylated RNA-directed RNA polymerase NS5; this interaction stimulates RNA-directed RNA polymerase NS5 guanylyltransferase activity. As to quaternary structure, interacts with host MAVS; this interaction inhibits the synthesis of IFN-beta. Interacts with host AUP1; the interaction occurs in the presence of Dengue virus NS4B and induces lipophagy which facilitates production of virus progeny particles. In terms of assembly, interacts with serine protease NS3. Homodimer. Interacts with host STAT2; this interaction inhibits the phosphorylation of the latter, and, when all viral proteins are present (polyprotein), targets STAT2 for degradation. Interacts with serine protease NS3. Post-translationally, specific enzymatic cleavages in vivo yield mature proteins. Cleavages in the lumen of endoplasmic reticulum are performed by host signal peptidase, whereas cleavages in the cytoplasmic side are performed by serine protease NS3. Signal cleavage at the 2K-4B site requires a prior NS3 protease-mediated cleavage at the 4A-2K site. Cleaved in post-Golgi vesicles by a host furin, releasing the mature small envelope protein M, and peptide pr. This cleavage is incomplete as up to 30% of viral particles still carry uncleaved prM. In terms of processing, N-glycosylated. Post-translationally, N-glycosylated. The excreted form is glycosylated and this is required for efficient secretion of the protein from infected cells. Acetylated by host KAT5. Acetylation modulates NS3 RNA-binding and unwinding activities and plays an important positive role for viral replication. In terms of processing, sumoylation of RNA-directed RNA polymerase NS5 increases NS5 protein stability allowing proper viral RNA replication. Post-translationally, phosphorylated on serines residues. This phosphorylation may trigger NS5 nuclear localization.

It localises to the virion. The protein localises to the host nucleus. Its subcellular location is the host cytoplasm. The protein resides in the host perinuclear region. It is found in the secreted. It localises to the virion membrane. The protein localises to the host endoplasmic reticulum membrane. Its subcellular location is the host mitochondrion. It carries out the reaction Selective hydrolysis of -Xaa-Xaa-|-Yaa- bonds in which each of the Xaa can be either Arg or Lys and Yaa can be either Ser or Ala.. It catalyses the reaction RNA(n) + a ribonucleoside 5'-triphosphate = RNA(n+1) + diphosphate. The catalysed reaction is a ribonucleoside 5'-triphosphate + H2O = a ribonucleoside 5'-diphosphate + phosphate + H(+). The enzyme catalyses ATP + H2O = ADP + phosphate + H(+). It carries out the reaction a 5'-end (5'-triphosphoguanosine)-ribonucleoside in mRNA + S-adenosyl-L-methionine = a 5'-end (N(7)-methyl 5'-triphosphoguanosine)-ribonucleoside in mRNA + S-adenosyl-L-homocysteine. It catalyses the reaction a 5'-end (N(7)-methyl 5'-triphosphoguanosine)-ribonucleoside in mRNA + S-adenosyl-L-methionine = a 5'-end (N(7)-methyl 5'-triphosphoguanosine)-(2'-O-methyl-ribonucleoside) in mRNA + S-adenosyl-L-homocysteine + H(+). Functionally, plays a role in virus budding by binding to the cell membrane and gathering the viral RNA into a nucleocapsid that forms the core of a mature virus particle. During virus entry, may induce genome penetration into the host cytoplasm after hemifusion induced by the surface proteins. Can migrate to the cell nucleus where it modulates host functions. Overcomes the anti-viral effects of host EXOC1 by sequestering and degrading the latter through the proteasome degradation pathway. Inhibits RNA silencing by interfering with host Dicer. In terms of biological role, prevents premature fusion activity of envelope proteins in trans-Golgi by binding to envelope protein E at pH6.0. After virion release in extracellular space, gets dissociated from E dimers. Its function is as follows. Acts as a chaperone for envelope protein E during intracellular virion assembly by masking and inactivating envelope protein E fusion peptide. prM is the only viral peptide matured by host furin in the trans-Golgi network probably to avoid catastrophic activation of the viral fusion activity in acidic Golgi compartment prior to virion release. prM-E cleavage is inefficient, and many virions are only partially matured. These uncleaved prM would play a role in immune evasion. Functionally, may play a role in virus budding. Exerts cytotoxic effects by activating a mitochondrial apoptotic pathway through M ectodomain. May display a viroporin activity. Binds to host cell surface receptor and mediates fusion between viral and cellular membranes. Envelope protein is synthesized in the endoplasmic reticulum in the form of heterodimer with protein prM. They play a role in virion budding in the ER, and the newly formed immature particle is covered with 60 spikes composed of heterodimer between precursor prM and envelope protein E. The virion is transported to the Golgi apparatus where the low pH causes dissociation of PrM-E heterodimers and formation of E homodimers. prM-E cleavage is inefficient, and many virions are only partially matured. These uncleaved prM would play a role in immune evasion. In terms of biological role, involved in immune evasion, pathogenesis and viral replication. Once cleaved off the polyprotein, is targeted to three destinations: the viral replication cycle, the plasma membrane and the extracellular compartment. Essential for viral replication. Required for formation of the replication complex and recruitment of other non-structural proteins to the ER-derived membrane structures. Excreted as a hexameric lipoparticle that plays a role against host immune response. Antagonizing the complement function. Binds to the host macrophages and dendritic cells. Inhibits signal transduction originating from Toll-like receptor 3 (TLR3). Its function is as follows. Disrupts the host endothelial glycocalyx layer of host pulmonary microvascular endothelial cells, inducing degradation of sialic acid and shedding of heparan sulfate proteoglycans. NS1 induces expression of sialidases, heparanase, and activates cathepsin L, which activates heparanase via enzymatic cleavage. These effects are probably linked to the endothelial hyperpermeability observed in severe dengue disease. Functionally, component of the viral RNA replication complex that functions in virion assembly and antagonizes the host immune response. Required cofactor for the serine protease function of NS3. May have membrane-destabilizing activity and form viroporins. In terms of biological role, displays three enzymatic activities: serine protease, NTPase and RNA helicase. NS3 serine protease, in association with NS2B, performs its autocleavage and cleaves the polyprotein at dibasic sites in the cytoplasm: C-prM, NS2A-NS2B, NS2B-NS3, NS3-NS4A, NS4A-2K and NS4B-NS5. NS3 RNA helicase binds RNA and unwinds dsRNA in the 3' to 5' direction. Its function is as follows. Regulates the ATPase activity of the NS3 helicase activity. NS4A allows NS3 helicase to conserve energy during unwinding. Plays a role in the inhibition of the host innate immune response. Interacts with host MAVS and thereby prevents the interaction between RIGI and MAVS. In turn, IFN-beta production is impaired. Interacts with host AUP1 which mediates induction of lipophagy in host cells and facilitates production of virus progeny particles. Functionally, functions as a signal peptide for NS4B and is required for the interferon antagonism activity of the latter. Induces the formation of ER-derived membrane vesicles where the viral replication takes place. Inhibits interferon (IFN)-induced host STAT1 phosphorylation and nuclear translocation, thereby preventing the establishment of cellular antiviral state by blocking the IFN-alpha/beta pathway. In terms of biological role, replicates the viral (+) and (-) RNA genome, and performs the capping of genomes in the cytoplasm. NS5 methylates viral RNA cap at guanine N-7 and ribose 2'-O positions. Besides its role in RNA genome replication, also prevents the establishment of cellular antiviral state by blocking the interferon-alpha/beta (IFN-alpha/beta) signaling pathway. Inhibits host TYK2 and STAT2 phosphorylation, thereby preventing activation of JAK-STAT signaling pathway. The chain is Genome polyprotein from Dengue virus type 3 (strain China/80-2/1980) (DENV-3).